The primary structure comprises 406 residues: Plasma serine protease inhibitor (406 aa).

The N-terminal stretch at 1–19 is a signal peptide; it reads MQLFLLLCLVLLSPQGASL. The propeptide at 20-25 is removed in mature form; the sequence is HRHHPR. Residue threonine 39 is glycosylated (O-linked (GalNAc...) threonine). 3 N-linked (GlcNAc...) asparagine glycosylation sites follow: asparagine 249, asparagine 262, and asparagine 338.

The protein belongs to the serpin family. In terms of assembly, forms protease inhibiting heterodimers in extracellular body fluids with serine proteases such as activated protein C/coagulation factor V/F5, acrosin/ACR, chymotrypsinogen B/CTRB1, prothrombin/F2, factor Xa/F10, factor XI/F11, kallikrein/KLKB1, tissue kallikrein, trypsin/PRSS1, prostate specific antigen/KLK3, tissue plasminogen activator/PLAT and urinary plasminogen activator/PLAU. Forms membrane-anchored serine proteases inhibiting heterodimers with TMPRSS7 and TMPRSS11E. Interacts with SEMG2. N- and O-glycosylated. N-glycosylation consists of a mixture of sialylated bi- (including sialyl-Lewis X epitopes), tri- and tetra-antennary complex-type chains; affects the maximal heparin- and thrombomodulin-enhanced rates of thrombin inhibition. O-glycosylated with core 1 or possibly core 8 glycans. Further modified with 2 sialic acid residues. Post-translationally, proteolytically cleaved. Inhibition of proteases is accompanied by formation of a stable enzyme-inhibitor complex and by degradation of the serpin to lower molecular weight derivatives. Proteolytically cleaved at the N-terminus; inhibits slightly the heparin- and thrombomodulin-enhanced rates of thrombin inhibition. In terms of tissue distribution, predominantly expressed in the epithelium of seminal vesicles. Expressed in the proximal tubular epithelium of the kidney. Expressed in the superficial and more differentiated epidermal keratinocytes of the skin. Expressed in megakaryocytes and platelets. Expressed poorly in kidney tumor cells compared to non tumor kidney tissues. Expressed in spermatozoa. Present in very high concentration in seminal plasma. Present in high concentration in plasma, synovial and Graaf follicle fluids. Present in low concentration in breast milk and in amniotic fluids. Present in very low concentration in urine, cerebrospinal fluids, saliva and tears (at protein level). Strongly expressed in liver. Expressed in kidney, spleen, pancreas, skeletal muscle, heart, testes, ovary, interstitial Leydig cells, epididymal glands, seminal vesicles and prostate.

The protein resides in the secreted. It localises to the extracellular space. Its inhibitory activity is greatly enhanced in the presence of glycosaminoglycans, heparin, thrombomodulin and phospholipids vesicles. In terms of biological role, heparin-dependent serine protease inhibitor acting in body fluids and secretions. Inactivates serine proteases by binding irreversibly to their serine activation site. Involved in the regulation of intravascular and extravascular proteolytic activities. Plays hemostatic roles in the blood plasma. Acts as a procoagulant and pro-inflammatory factor by inhibiting the anticoagulant activated protein C factor as well as the generation of activated protein C factor by the thrombin/thrombomodulin complex. Acts as an anticoagulant factor by inhibiting blood coagulation factors like prothrombin, factor XI, factor Xa, plasma kallikrein and fibrinolytic enzymes such as tissue- and urinary-type plasminogen activators. In seminal plasma, inactivates several serine proteases implicated in the reproductive system. Inhibits the serpin acrosin; indirectly protects component of the male genital tract from being degraded by excessive released acrosin. Inhibits tissue- and urinary-type plasminogen activator, prostate-specific antigen and kallikrein activities; has a control on the sperm motility and fertilization. Inhibits the activated protein C-catalyzed degradation of SEMG1 and SEMG2; regulates the degradation of semenogelin during the process of transfer of spermatozoa from the male reproductive tract into the female tract. In urine, inhibits urinary-type plasminogen activator and kallikrein activities. Inactivates membrane-anchored serine proteases activities such as MPRSS7 and TMPRSS11E. Inhibits urinary-type plasminogen activator-dependent tumor cell invasion and metastasis. May also play a non-inhibitory role in seminal plasma and urine as a hydrophobic hormone carrier by its binding to retinoic acid. The protein is Plasma serine protease inhibitor (SERPINA5) of Homo sapiens (Human).